The following is a 947-amino-acid chain: Beta-glucosidase (947 aa).

Residue Asp696 is part of the active site.

The protein belongs to the glycosyl hydrolase 3 family.

The catalysed reaction is Hydrolysis of terminal, non-reducing beta-D-glucosyl residues with release of beta-D-glucose.. It participates in glycan metabolism; cellulose degradation. This chain is Beta-glucosidase, found in Ruminococcus albus.